The sequence spans 286 residues: CLA biosynthesis dehydrogenase/reductase (286 aa).

Residues Asp-37, Asp-63, Val-64, Asn-90, Tyr-156, and Lys-160 each contribute to the NAD(+) site. Tyr-156 acts as the Proton acceptor in catalysis.

Belongs to the short-chain dehydrogenases/reductases (SDR) family.

The protein resides in the cytoplasm. It carries out the reaction (10S)-hydroxy-(12Z)-octadecenoate + NAD(+) = 10-oxo-(12Z)-octadecenoate + NADH + H(+). The catalysed reaction is 10-oxo-(11E)-octadecenoate + NADH + H(+) = 10-hydroxy-(11E)-octadecenoate + NAD(+). The enzyme catalyses 10-oxooctadecanoate + NADH + H(+) = 10-hydroxyoctadecanoate + NAD(+). It functions in the pathway lipid metabolism; fatty acid metabolism. Is involved in a saturation metabolic pathway of polyunsaturated fatty acids, that detoxifies unsaturated fatty acids and generates hydroxy fatty acids, oxo fatty acids, conjugated fatty acids such as conjugated linoleic acids (CLAs), and partially saturated trans-fatty acids as intermediates. CLA-DH catalyzes the dehydrogenation/reduction steps in the production of 10-oxo-(12Z)-octadecenoate, 10-hydroxy-(11E)-octadecenoate and 10-hydroxyoctadecanoate during linoleate metabolism. As part of the gut microbiome, this enzyme modifies host fatty acid composition and is expected to improve human health by altering lipid metabolism related to the onset of metabolic syndrome. The chain is CLA biosynthesis dehydrogenase/reductase from Lactiplantibacillus plantarum (Lactobacillus plantarum).